We begin with the raw amino-acid sequence, 185 residues long: Celestoxin (185 aa).

Positions 1–20 are cleaved as a signal peptide; that stretch reads MKFIAAVLLVALLCPKDSTS. A propeptide spanning residues 21-148 is cleaved from the precursor; the sequence is LASRLSGLLG…GLPVALPVSV (128 aa).

Expressed by the mandibular venom gland.

The protein localises to the secreted. In terms of biological role, has a hypotensive activity. This chain is Celestoxin, found in Caribicus warreni (Haitian giant galliwasp).